A 200-amino-acid chain; its full sequence is Pyridoxal 5'-phosphate synthase subunit PdxT (200 aa).

An L-glutamine-binding site is contributed by 46–48 (GES). Cysteine 78 (nucleophile) is an active-site residue. L-glutamine is bound by residues arginine 107 and 138-139 (IR). Residues histidine 175 and glutamate 177 each act as charge relay system in the active site.

The protein belongs to the glutaminase PdxT/SNO family. In the presence of PdxS, forms a dodecamer of heterodimers. Only shows activity in the heterodimer.

It carries out the reaction aldehydo-D-ribose 5-phosphate + D-glyceraldehyde 3-phosphate + L-glutamine = pyridoxal 5'-phosphate + L-glutamate + phosphate + 3 H2O + H(+). The enzyme catalyses L-glutamine + H2O = L-glutamate + NH4(+). It functions in the pathway cofactor biosynthesis; pyridoxal 5'-phosphate biosynthesis. Functionally, catalyzes the hydrolysis of glutamine to glutamate and ammonia as part of the biosynthesis of pyridoxal 5'-phosphate. The resulting ammonia molecule is channeled to the active site of PdxS. The protein is Pyridoxal 5'-phosphate synthase subunit PdxT of Corynebacterium glutamicum (strain R).